Here is a 290-residue protein sequence, read N- to C-terminus: Sodium/potassium-transporting ATPase subunit beta-2 (290 aa).

Over 1 to 39 (MVIQKEKKSCGQVVEEWKEFVWNPRTHQFMGRTGTSWAF) the chain is Cytoplasmic. A helical; Signal-anchor for type II membrane protein transmembrane segment spans residues 40 to 67 (ILLFYLVFYGFLTAMFTLTMWVMLQTVS). The Extracellular segment spans residues 68 to 290 (DHTPKYQDRL…VAFKLRINKA (223 aa)). Asn-96 and Asn-118 each carry an N-linked (GlcNAc...) asparagine glycan. Cys-129 and Cys-150 are joined by a disulfide. Asn-153 and Asn-159 each carry an N-linked (GlcNAc...) asparagine glycan. Cys-160 and Cys-177 are oxidised to a cystine. Asn-193, Asn-197, and Asn-238 each carry an N-linked (GlcNAc...) asparagine glycan. Residues 193–290 (NQSMNVTCVG…VAFKLRINKA (98 aa)) are immunoglobulin-like. A disulfide bridge links Cys-200 with Cys-261.

It belongs to the X(+)/potassium ATPases subunit beta family. In terms of assembly, the sodium/potassium-transporting ATPase is composed of a catalytic alpha subunit, an auxiliary non-catalytic beta subunit and an additional regulatory subunit. Interacts with isoform 2 of BSG. As to expression, highly expressed in brain (at protein level).

The protein localises to the cell membrane. Its function is as follows. This is the non-catalytic component of the active enzyme, which catalyzes the hydrolysis of ATP coupled with the exchange of Na(+) and K(+) ions across the plasma membrane. The exact function of the beta-2 subunit is not known. In terms of biological role, mediates cell adhesion of neurons and astrocytes, and promotes neurite outgrowth. This Rattus norvegicus (Rat) protein is Sodium/potassium-transporting ATPase subunit beta-2 (Atp1b2).